We begin with the raw amino-acid sequence, 369 residues long: P2X receptor B (369 aa).

At 1-25 the chain is on the cytoplasmic side; sequence MTIDWDSILSYNTIKVVRIRDRRLG. Residues 26-46 traverse the membrane as a helical segment; sequence ILHLCFLIVIVLYVVVYSAII. The Lumenal segment spans residues 47 to 369; that stretch reads KKGYVTTEEP…DKLYHNIEAL (323 aa). The tract at residues 283–296 is pore-forming motif; sequence RHAIRLIFIQTGVI.

Belongs to the P2X receptor family.

The protein localises to the contractile vacuole membrane. In terms of biological role, P2X receptors are ATP-gated ion channels that play a role in intracellular calcium signaling. Not required for the purinergic response to extracellular nucleotides. Not essential for osmoregulation. Inward currents are evoked by intracellular ATP and ATP analogs. Insensitive to the P2 receptor antagonists PPADS and suramin, and also copper ions. Inhibited by sodium ions. Permeable to chloride ions. The sequence is that of P2X receptor B (p2xB) from Dictyostelium discoideum (Social amoeba).